Consider the following 516-residue polypeptide: Methionine--tRNA ligase (516 aa).

The 'HIGH' region signature appears at 14-24; that stretch reads SYPNGKPHIGH. The short motif at 302 to 306 is the 'KMSKS' region element; sequence KMSKS. K305 is a binding site for ATP.

Belongs to the class-I aminoacyl-tRNA synthetase family. MetG type 2B subfamily. In terms of assembly, monomer.

Its subcellular location is the cytoplasm. The enzyme catalyses tRNA(Met) + L-methionine + ATP = L-methionyl-tRNA(Met) + AMP + diphosphate. Functionally, is required not only for elongation of protein synthesis but also for the initiation of all mRNA translation through initiator tRNA(fMet) aminoacylation. The polypeptide is Methionine--tRNA ligase (Rhizobium meliloti (strain 1021) (Ensifer meliloti)).